The primary structure comprises 324 residues: Phosphate transport system permease protein PstC 2 (324 aa).

The next 6 membrane-spanning stretches (helical) occupy residues 30–50 (ASAA…FLLV), 90–110 (LSSI…AVFL), 125–145 (MVDL…IFVL), 174–194 (AGGG…LPIV), 237–257 (VAAS…VLVI), and 290–310 (PLPT…TFLV). The region spanning 85-314 (FMVTALSSIT…VLTFLVNAAA (230 aa)) is the ABC transmembrane type-1 domain.

This sequence belongs to the binding-protein-dependent transport system permease family. CysTW subfamily.

It is found in the cell membrane. Its function is as follows. Part of the binding-protein-dependent transport system for phosphate; probably responsible for the translocation of the substrate across the membrane. In Mycobacterium bovis (strain ATCC BAA-935 / AF2122/97), this protein is Phosphate transport system permease protein PstC 2 (pstC2).